We begin with the raw amino-acid sequence, 98 residues long: NADH-ubiquinone oxidoreductase chain 4L (98 aa).

Transmembrane regions (helical) follow at residues 1-21 (MSLT…GLLL), 29-49 (SLLC…MTIL), and 61-81 (IILL…LVMV).

The protein belongs to the complex I subunit 4L family. In terms of assembly, core subunit of respiratory chain NADH dehydrogenase (Complex I) which is composed of 45 different subunits.

The protein localises to the mitochondrion inner membrane. It carries out the reaction a ubiquinone + NADH + 5 H(+)(in) = a ubiquinol + NAD(+) + 4 H(+)(out). Its function is as follows. Core subunit of the mitochondrial membrane respiratory chain NADH dehydrogenase (Complex I) which catalyzes electron transfer from NADH through the respiratory chain, using ubiquinone as an electron acceptor. Part of the enzyme membrane arm which is embedded in the lipid bilayer and involved in proton translocation. In Vampyrodes caraccioli (Great stripe-faced bat), this protein is NADH-ubiquinone oxidoreductase chain 4L (MT-ND4L).